The sequence spans 585 residues: CTP synthase (585 aa).

Residues 1–281 (MPALRKHPHT…DAYVVRRLNL (281 aa)) are amidoligase domain. Residue S23 coordinates CTP. S23 provides a ligand contact to UTP. ATP contacts are provided by residues 24 to 29 (SLGKGL) and D81. Residues D81 and E155 each contribute to the Mg(2+) site. CTP-binding positions include 162–164 (DIE), 202–207 (KTKPTQ), and K238. Residues 202–207 (KTKPTQ) and K238 contribute to the UTP site. Residues 306–554 (RIALVGKYID…VGAAVEYNNG (249 aa)) form the Glutamine amidotransferase type-1 domain. G369 is an L-glutamine binding site. C396 acts as the Nucleophile; for glutamine hydrolysis in catalysis. Residues 397-400 (LGLQ), E419, and R480 each bind L-glutamine. Active-site residues include H527 and E529. The tract at residues 564-585 (IPTADHQSNGAEHALEDAPARG) is disordered. Positions 576–585 (HALEDAPARG) are enriched in basic and acidic residues.

The protein belongs to the CTP synthase family. Homotetramer.

The catalysed reaction is UTP + L-glutamine + ATP + H2O = CTP + L-glutamate + ADP + phosphate + 2 H(+). It carries out the reaction L-glutamine + H2O = L-glutamate + NH4(+). The enzyme catalyses UTP + NH4(+) + ATP = CTP + ADP + phosphate + 2 H(+). It participates in pyrimidine metabolism; CTP biosynthesis via de novo pathway; CTP from UDP: step 2/2. Allosterically activated by GTP, when glutamine is the substrate; GTP has no effect on the reaction when ammonia is the substrate. The allosteric effector GTP functions by stabilizing the protein conformation that binds the tetrahedral intermediate(s) formed during glutamine hydrolysis. Inhibited by the product CTP, via allosteric rather than competitive inhibition. Its function is as follows. Catalyzes the ATP-dependent amination of UTP to CTP with either L-glutamine or ammonia as the source of nitrogen. Regulates intracellular CTP levels through interactions with the four ribonucleotide triphosphates. This Mycolicibacterium gilvum (strain PYR-GCK) (Mycobacterium gilvum (strain PYR-GCK)) protein is CTP synthase.